We begin with the raw amino-acid sequence, 689 residues long: Beta-galactosidase Pbg (689 aa).

R118 is a substrate binding site. C122 serves as a coordination point for Zn(2+). Position 156 (N156) interacts with substrate. The Proton donor role is filled by E157. 3 residues coordinate Zn(2+): C162, C164, and C167. Catalysis depends on E318, which acts as the Nucleophile. Substrate is bound by residues W326 and 366 to 369 (EKFH).

This sequence belongs to the glycosyl hydrolase 42 family.

It catalyses the reaction Hydrolysis of terminal non-reducing beta-D-galactose residues in beta-D-galactosides.. The polypeptide is Beta-galactosidase Pbg (Clostridium perfringens (strain ATCC 13124 / DSM 756 / JCM 1290 / NCIMB 6125 / NCTC 8237 / Type A)).